A 647-amino-acid chain; its full sequence is DNA mismatch repair protein MutL (647 aa).

This sequence belongs to the DNA mismatch repair MutL/HexB family.

This protein is involved in the repair of mismatches in DNA. It is required for dam-dependent methyl-directed DNA mismatch repair. May act as a 'molecular matchmaker', a protein that promotes the formation of a stable complex between two or more DNA-binding proteins in an ATP-dependent manner without itself being part of a final effector complex. The chain is DNA mismatch repair protein MutL from Bacillus thuringiensis subsp. konkukian (strain 97-27).